Reading from the N-terminus, the 418-residue chain is Tyrosine--tRNA ligase (418 aa).

Y34 serves as a coordination point for L-tyrosine. The 'HIGH' region motif lies at 39–48; that stretch reads PTADSLHLGH. L-tyrosine contacts are provided by Y169 and Q173. A 'KMSKS' region motif is present at residues 229–233; that stretch reads KFGKS. K232 contacts ATP. The S4 RNA-binding domain occupies 352–418; it reads NNIVELLVSS…GKKKYFVLTY (67 aa).

It belongs to the class-I aminoacyl-tRNA synthetase family. TyrS type 1 subfamily. In terms of assembly, homodimer.

Its subcellular location is the cytoplasm. It carries out the reaction tRNA(Tyr) + L-tyrosine + ATP = L-tyrosyl-tRNA(Tyr) + AMP + diphosphate + H(+). Its function is as follows. Catalyzes the attachment of tyrosine to tRNA(Tyr) in a two-step reaction: tyrosine is first activated by ATP to form Tyr-AMP and then transferred to the acceptor end of tRNA(Tyr). This is Tyrosine--tRNA ligase from Streptococcus pneumoniae serotype 19F (strain G54).